Consider the following 2147-residue polypeptide: Probable serine/threonine-protein kinase roco6 (2147 aa).

Topologically, residues 1-1055 (MNSIHKQHYT…LDHSRVEFNR (1055 aa)) are extracellular. 11 LRR repeats span residues 69 to 89 (DMKY…MMIP), 101 to 122 (SISI…LKQL), 124 to 145 (QLIS…FPEE), 148 to 169 (LLRK…FNKF), 171 to 192 (ILED…LFPE), 193 to 214 (GIMR…PWFE), 215 to 236 (SLLT…PFHL), 237 to 256 (VRVS…VILR), 306 to 328 (HLTH…ANLT), 329 to 350 (ELVR…IVSY), and 352 to 372 (RLEH…PRRI). A Roc domain is found at 390–750 (QGEPSYRVKL…DLLKKTVVEL (361 aa)). A small GTPase-like region spans residues 390–750 (QGEPSYRVKL…DLLKKTVVEL (361 aa)). 403-410 (GQENVGKT) contacts GTP. Disordered stretches follow at residues 491-582 (NSNG…VGTN) and 602-621 (SNLS…GGSG). Composition is skewed to low complexity over residues 492–512 (SNGV…NIHS), 519–531 (NVNS…SNNS), 539–568 (NSFL…NVNS), and 602–617 (SNLS…NNNS). Residues 634-638 (DCAGQ) and 691-694 (THLD) each bind GTP. In terms of domain architecture, COR spans 758 to 892 (PELYLKLEKL…RFELMFPLDS (135 aa)). Low complexity-rich tracts occupy residues 905 to 941 (GNSY…SPST) and 960 to 977 (SGNN…RSIS). Residues 905 to 995 (GNSYVNNNNN…NSDLDLIGGG (91 aa)) form a disordered region. Residues 1051–1098 (VEFNRWIQLSFAPAGLFSRLLIRLLISKEFDMKPILYWRNGVVVESQS) form a WD 1 repeat. Residues 1056-1076 (WIQLSFAPAGLFSRLLIRLLI) traverse the membrane as a helical segment. Over 1077–2147 (SKEFDMKPIL…CGTNNVCIWS (1071 aa)) the chain is Cytoplasmic. LRR repeat units follow at residues 1237-1263 (ILSI…PPPP), 1274-1297 (DDNI…GSQP), and 1325-1348 (ESSL…TYKY). The region spanning 1356–1627 (FESPKLIGRG…KIVKRIKQII (272 aa)) is the Protein kinase domain. ATP-binding positions include 1362-1370 (IGRGASGKI) and Lys-1383. The Proton acceptor role is filled by Asp-1481. The interval 1653-1699 (ADSQPFHYHQQQQPSLNSTNQLQQQQYSSVLTSPRSNLSDSSNSSQN) is disordered. Low complexity predominate over residues 1662 to 1699 (QQQQPSLNSTNQLQQQQYSSVLTSPRSNLSDSSNSSQN). WD repeat units follow at residues 1735 to 1774 (QPEA…QIFR) and 1778 to 1820 (LHPG…LDDQ). Residues 1821-1923 (SGTKSDFITK…WLTAINRVIN (103 aa)) form the PH domain. The stretch at 2031-2068 (HYSKPITSMALVEKNVWISCEDESLSVWDGDTGSFIRK) is one WD 4 repeat.

The protein belongs to the protein kinase superfamily. TKL Ser/Thr protein kinase family. ROCO subfamily.

It is found in the membrane. The catalysed reaction is L-seryl-[protein] + ATP = O-phospho-L-seryl-[protein] + ADP + H(+). It catalyses the reaction L-threonyl-[protein] + ATP = O-phospho-L-threonyl-[protein] + ADP + H(+). Functionally, may act as a serine/threonine-protein kinase and guanine-nucleotide releasing factor. The sequence is that of Probable serine/threonine-protein kinase roco6 (roco6) from Dictyostelium discoideum (Social amoeba).